The following is a 254-amino-acid chain: 3-deoxy-manno-octulosonate cytidylyltransferase (254 aa).

This sequence belongs to the KdsB family.

It is found in the cytoplasm. It carries out the reaction 3-deoxy-alpha-D-manno-oct-2-ulosonate + CTP = CMP-3-deoxy-beta-D-manno-octulosonate + diphosphate. It functions in the pathway nucleotide-sugar biosynthesis; CMP-3-deoxy-D-manno-octulosonate biosynthesis; CMP-3-deoxy-D-manno-octulosonate from 3-deoxy-D-manno-octulosonate and CTP: step 1/1. It participates in bacterial outer membrane biogenesis; lipopolysaccharide biosynthesis. In terms of biological role, activates KDO (a required 8-carbon sugar) for incorporation into bacterial lipopolysaccharide in Gram-negative bacteria. The protein is 3-deoxy-manno-octulosonate cytidylyltransferase of Haemophilus influenzae (strain ATCC 51907 / DSM 11121 / KW20 / Rd).